The sequence spans 1526 residues: High affinity cGMP-specific 3',5'-cyclic phosphodiesterase 9A (1526 aa).

A compositionally biased stretch (low complexity) spans 1 to 43 (MYQDSGCSSSSSRRGSSSAAAATSTAATAAETAAAAAATTTSS). 3 disordered regions span residues 1-48 (MYQD…DEET), 266-348 (SSRS…SGTA), and 393-476 (RHHH…ASDC). Basic and acidic residues-rich tracts occupy residues 270–282 (RSSE…HEQD) and 305–314 (EHPSEKPERT). Low complexity-rich tracts occupy residues 324–348 (IAVT…SGTA) and 401–440 (QQHQ…ATAT). Polar residues predominate over residues 441–462 (PSVEQPATSGTTNIHLQPTSLP). Residues 664-985 (VKRRFLEICD…EYYRRLNDAQ (322 aa)) form the PDEase domain. His740 functions as the Proton donor in the catalytic mechanism. Residue 740-744 (HNFRH) participates in 3',5'-cyclic GMP binding. Zn(2+)-binding residues include His744, His780, Asp781, and Asp890. 2 residues coordinate 3',5'-cyclic GMP: Asp781 and Asp890. A Mg(2+)-binding site is contributed by Asp781. 5 disordered regions span residues 986 to 1170 (TKTR…SSGG), 1265 to 1284 (TEAD…KKIP), 1314 to 1351 (SNGS…GSSW), 1372 to 1406 (RFGS…DGLG), and 1469 to 1496 (RYSS…LTTG). The span at 993–1005 (ADSNTSATSDSNS) shows a compositional bias: low complexity. The segment covering 1033–1057 (NSQGSGGGGGGGGGGGAGGGTGSGC) has biased composition (gly residues). Over residues 1065-1093 (VSPQMPRSGSGISVKSRRSIPSQKSASRT) the composition is skewed to polar residues. A compositionally biased stretch (basic and acidic residues) spans 1125-1136 (VAEKTSKFKVDT). A compositionally biased stretch (low complexity) spans 1139–1148 (SSNRSKSSHS). The segment covering 1314 to 1324 (SNGSTRSSASS) has biased composition (low complexity). Over residues 1325-1340 (GRGGSGVPGGSGGSGM) the composition is skewed to gly residues. 2 stretches are compositionally biased toward low complexity: residues 1341 to 1350 (PGPSAGSGSS) and 1375 to 1397 (STRS…NANG). A compositionally biased stretch (polar residues) spans 1470-1486 (YSSNDSSRHPSNNTLQS).

Belongs to the cyclic nucleotide phosphodiesterase family. PDE9 subfamily. The cofactor is Zn(2+). Mg(2+) serves as cofactor. In terms of tissue distribution, expressed in Malpighian tubules and adult fly head.

The catalysed reaction is 3',5'-cyclic GMP + H2O = GMP + H(+). It participates in purine metabolism; 3',5'-cyclic GMP degradation; GMP from 3',5'-cyclic GMP: step 1/1. Functionally, specifically hydrolyzes the second messenger cGMP, which is a key regulator of many important physiological processes. Highly specific: compared to other members of the cyclic nucleotide phosphodiesterase family, has the highest affinity and selectivity for cGMP. In Drosophila melanogaster (Fruit fly), this protein is High affinity cGMP-specific 3',5'-cyclic phosphodiesterase 9A.